A 301-amino-acid polypeptide reads, in one-letter code: MERLVQRMYCLGMRDPPPANIMAQQEPNGDFPYLPSGAAEVNRMIKENSDLFSDSQCKVCSAVLISESQKLAHYQSKKHASKVRRYMSIHGSEEPIAKRFKPSGDDQSNVDEKDKYKACSVCNMTFSSPVVAQSHYQGKVHSKNLRMQSIGSQTPALPQPEAQAKKDDGMQGPAEQDPNRFCSICQASFNNPLMAQQHYSGKKHKKHMNKQKLMETFGPSTAPASTVKGYPCTVCNIELNSVEQYQAHISGSKHKNHAKPKKGPNAFAPPPDNYQPDYQYPTNEDCLEDPAEWDSFNVAYE.

2 consecutive Matrin-type zinc fingers follow at residues 55-85 (SQCKVCSAVLISESQKLAHYQSKKHASKVRR) and 117-141 (KACSVCNMTFSSPVVAQSHYQGKVH). Zn(2+) is bound by residues C57, C60, H73, H79, C119, C122, H135, and H141. The segment at 151–177 (GSQTPALPQPEAQAKKDDGMQGPAEQD) is disordered. 2 Matrin-type zinc fingers span residues 180–210 (RFCSICQASFNNPLMAQQHYSGKKHKKHMNK) and 230–257 (YPCTVCNIELNSVEQYQAHISGSKHKNH). The interval 250–283 (SGSKHKNHAKPKKGPNAFAPPPDNYQPDYQYPTN) is disordered. Positions 251-262 (GSKHKNHAKPKK) are enriched in basic residues.

It localises to the nucleus. Its subcellular location is the cytoplasm. Binds preferentially to dsRNA, but also to RNA-DNA hybrids. This chain is Zinc finger protein 346, found in Danio rerio (Zebrafish).